A 98-amino-acid polypeptide reads, in one-letter code: NADH-ubiquinone oxidoreductase chain 4L (98 aa).

3 consecutive transmembrane segments (helical) span residues 1–21 (MSLVYMNIIMAFTTSLVGLLM), 29–49 (SLLCLEGMMLSLFIMATLIIL), and 61–81 (IILLVFAACEAALGLSLLVMV).

The protein belongs to the complex I subunit 4L family. Core subunit of respiratory chain NADH dehydrogenase (Complex I) which is composed of 45 different subunits.

It localises to the mitochondrion inner membrane. The enzyme catalyses a ubiquinone + NADH + 5 H(+)(in) = a ubiquinol + NAD(+) + 4 H(+)(out). Functionally, core subunit of the mitochondrial membrane respiratory chain NADH dehydrogenase (Complex I) which catalyzes electron transfer from NADH through the respiratory chain, using ubiquinone as an electron acceptor. Part of the enzyme membrane arm which is embedded in the lipid bilayer and involved in proton translocation. The chain is NADH-ubiquinone oxidoreductase chain 4L (MT-ND4L) from Hippopotamus amphibius (Hippopotamus).